Reading from the N-terminus, the 2415-residue chain is Bradyzoite-formation deficient protein 1 (2415 aa).

Disordered regions lie at residues 369–392 (WNKPEAARQEYHRASASARGPEET), 418–481 (HLTS…PYTR), and 761–845 (DGCG…QDTQ). Residues 419–429 (LTSRQHPNPRP) are compositionally biased toward basic residues. Basic and acidic residues predominate over residues 430 to 443 (RMKEEHCGREREVL). Composition is skewed to polar residues over residues 444–460 (SSEQPSDCGETQKTPAS) and 832–843 (PRTTSSSSYGQD). One can recognise a Myb-like domain in the interval 921–968 (WSAEEDASLAELVSRKGFKWALISSQLTGAFGIPRTGKQCRERWFNHV). The 55-residue stretch at 969 to 1023 (NPEVKKGDWSAEEDAMILMLQNELGNRWATIAKKLRGRTENAVKNRFISLSNARL) folds into the HTH myb-type domain. The segment at residues 996 to 1019 (WATIAKKLRGRTENAVKNRFISLS) is a DNA-binding region (H-T-H motif). Disordered stretches follow at residues 1027–1050 (RPKRDGSSADCFSNRRTGSGKSSG), 1098–1127 (VSRPRQCTGTSPSCGHPSAGEGDPSHLKNT), 1206–1270 (NDER…NGLD), 1319–1343 (PACDHRGAPQNSVESGEQSPDAQRQ), 1501–1521 (QLWTSQETESDTNPSPNQQHE), 1905–1932 (VSRDKQREPPKNGLTGCDVPEYLGTSQS), 1959–2013 (RVRW…GSTA), and 2161–2222 (GTDA…EMQD). Residues 1036 to 1050 (DCFSNRRTGSGKSSG) are compositionally biased toward polar residues. Residues 1227 to 1237 (AHEHADIARSD) show a composition bias toward basic and acidic residues. 2 stretches are compositionally biased toward polar residues: residues 1327-1343 (PQNSVESGEQSPDAQRQ) and 1501-1520 (QLWTSQETESDTNPSPNQQH). The span at 1974–1985 (SVSSGASNSATT) shows a compositional bias: polar residues. A compositionally biased stretch (basic and acidic residues) spans 2181–2197 (QAHRRDGHDMQRVQRCD).

The protein resides in the nucleus. Functionally, master transcription factor that controls the differentiation of acute-stage tachyzoite parasites into chronic-stage bradyzoites, which form intracellular cysts resistant to immune clearance and existing therapies. Sufficient to drive differentiation into bradyzoite stage. Following translation in response to stress conditions, binds to the promoter of many chronic stage-specific genes and promotes their expression, thereby driving differentiation into bradyzoites. The polypeptide is Bradyzoite-formation deficient protein 1 (Toxoplasma gondii (strain ATCC 50611 / Me49)).